The chain runs to 165 residues: Small ribosomal subunit protein uS5 (165 aa).

The S5 DRBM domain occupies 13 to 76; the sequence is LEEKVLVVNR…DAARKNLVSI (64 aa).

Belongs to the universal ribosomal protein uS5 family. In terms of assembly, part of the 30S ribosomal subunit. Contacts proteins S4 and S8.

Functionally, with S4 and S12 plays an important role in translational accuracy. Located at the back of the 30S subunit body where it stabilizes the conformation of the head with respect to the body. The chain is Small ribosomal subunit protein uS5 from Chlamydia muridarum (strain MoPn / Nigg).